A 622-amino-acid polypeptide reads, in one-letter code: UvrABC system protein C (622 aa).

The 80-residue stretch at 13–92 (EKPGVYLMKN…IKKYRPKYNI (80 aa)) folds into the GIY-YIG domain. The UVR domain occupies 204-239 (KDILDKLKNQMEEASNSLQFEKAASLRDKIFAVKKI).

It belongs to the UvrC family. As to quaternary structure, interacts with UvrB in an incision complex.

It localises to the cytoplasm. Its function is as follows. The UvrABC repair system catalyzes the recognition and processing of DNA lesions. UvrC both incises the 5' and 3' sides of the lesion. The N-terminal half is responsible for the 3' incision and the C-terminal half is responsible for the 5' incision. This chain is UvrABC system protein C, found in Clostridium tetani (strain Massachusetts / E88).